The primary structure comprises 95 residues: Large ribosomal subunit protein bL27 (95 aa).

Positions 1-10 (MRFILNLQFF) are excised as a propeptide.

Belongs to the bacterial ribosomal protein bL27 family. In terms of processing, the N-terminus is cleaved by ribosomal processing cysteine protease Prp.

The chain is Large ribosomal subunit protein bL27 from Mesoplasma florum (strain ATCC 33453 / NBRC 100688 / NCTC 11704 / L1) (Acholeplasma florum).